Consider the following 319-residue polypeptide: Thioredoxin reductase (319 aa).

Residues 11-14, 40-41, Gln45, Asn54, Val87, Cys145, Asp288, and 295-297 contribute to the FAD site; these read SGPA, IA, and RQA. An intrachain disulfide couples Cys142 to Cys145.

It belongs to the class-II pyridine nucleotide-disulfide oxidoreductase family. Homodimer. The cofactor is FAD.

It localises to the cytoplasm. The enzyme catalyses [thioredoxin]-dithiol + NADP(+) = [thioredoxin]-disulfide + NADPH + H(+). This chain is Thioredoxin reductase (TRR1), found in Yarrowia lipolytica (strain CLIB 122 / E 150) (Yeast).